A 371-amino-acid chain; its full sequence is Aminomethyltransferase (371 aa).

This sequence belongs to the GcvT family. The glycine cleavage system is composed of four proteins: P, T, L and H.

The catalysed reaction is N(6)-[(R)-S(8)-aminomethyldihydrolipoyl]-L-lysyl-[protein] + (6S)-5,6,7,8-tetrahydrofolate = N(6)-[(R)-dihydrolipoyl]-L-lysyl-[protein] + (6R)-5,10-methylene-5,6,7,8-tetrahydrofolate + NH4(+). Functionally, the glycine cleavage system catalyzes the degradation of glycine. The sequence is that of Aminomethyltransferase from Oceanobacillus iheyensis (strain DSM 14371 / CIP 107618 / JCM 11309 / KCTC 3954 / HTE831).